Consider the following 312-residue polypeptide: Taste receptor type 2 member 9 (312 aa).

At 1-9 (MPSAIEAIY) the chain is on the extracellular side. A helical membrane pass occupies residues 10-32 (IILIAGELTIGIWGNGFIVLVNC). Over 33–52 (XDWLKRRDISLIDIILISLA) the chain is Cytoplasmic. Residues 53–72 (ISRICLLCVISLDGFFMLLF) traverse the membrane as a helical segment. Residues 73–86 (PGTYGNSVLVSIVN) are Extracellular-facing. A helical membrane pass occupies residues 87–109 (VVWTFANNSSLWFTSCLSIFYLL). Residues 110–128 (KIANISHPFFFWLKLKINK) lie on the Cytoplasmic side of the membrane. A helical membrane pass occupies residues 129-146 (VMLAILLGSFLISLIISV). The Extracellular segment spans residues 147-180 (XKNDDMWYHLFKVSXEENITWEFKVSKIPGTFKQ). Asn164 carries an N-linked (GlcNAc...) asparagine glycan. The helical transmembrane segment at 181 to 203 (LTLNLGGRVPFILCLISFFLLLF) threads the bilayer. At 204 to 234 (SLVRHTKQIQLHATGFRDPSTEAHMRAIKAV) the chain is on the cytoplasmic side. Residues 235-257 (IIFLLLLIVYYPVFLVMTSSALI) traverse the membrane as a helical segment. At 258 to 261 (PQGK) the chain is on the extracellular side. A helical membrane pass occupies residues 262–284 (LVLMIGDIVTVIFPSSHSFILIM). The Cytoplasmic portion of the chain corresponds to 285–312 (GNSKLREAFLKMLRFVKGFLRRRKPFVP).

Belongs to the G-protein coupled receptor T2R family.

Its subcellular location is the membrane. Gustducin-coupled receptor implicated in the perception of bitter compounds in the oral cavity and the gastrointestinal tract. Signals through PLCB2 and the calcium-regulated cation channel TRPM5. The polypeptide is Taste receptor type 2 member 9 (TAS2R9) (Pan troglodytes (Chimpanzee)).